A 269-amino-acid polypeptide reads, in one-letter code: GTP cyclohydrolase FolE2 2 (269 aa).

This sequence belongs to the GTP cyclohydrolase IV family.

The catalysed reaction is GTP + H2O = 7,8-dihydroneopterin 3'-triphosphate + formate + H(+). Its pathway is cofactor biosynthesis; 7,8-dihydroneopterin triphosphate biosynthesis; 7,8-dihydroneopterin triphosphate from GTP: step 1/1. Its function is as follows. Converts GTP to 7,8-dihydroneopterin triphosphate. This is GTP cyclohydrolase FolE2 2 from Burkholderia lata (strain ATCC 17760 / DSM 23089 / LMG 22485 / NCIMB 9086 / R18194 / 383).